The chain runs to 380 residues: N-acetylaspartylglutamate synthase A (380 aa).

The 186-residue stretch at 115–300 (FQELAGHGVP…VGAIIADYAM (186 aa)) folds into the ATP-grasp domain. ATP-binding positions include Lys-154, 189 to 199 (QKYVKESHGKD), and Arg-215. Positions 260, 273, and 275 each coordinate Mg(2+). Positions 260, 273, and 275 each coordinate Mn(2+). At Ser-319 the chain carries Phosphoserine. The segment at 345 to 370 (GSTSSESEPELGEARDSSVKTMGAPP) is disordered.

This sequence belongs to the RimK family. Requires Mg(2+) as cofactor. Mn(2+) is required as a cofactor. Highly expressed in spinal cord and brain.

It is found in the cytoplasm. The catalysed reaction is N-acetyl-L-aspartate + L-glutamate + ATP = N-acetyl-L-aspartyl-L-glutamate + ADP + phosphate + H(+). The enzyme catalyses N-acetyl-L-aspartate + 2 L-glutamate + 2 ATP = N-acetyl-L-aspartyl-L-glutamyl-L-glutamate + 2 ADP + 2 phosphate + 2 H(+). In terms of biological role, catalyzes the synthesis of N-acetyl-L-aspartyl-L-glutamate (NAAG) and N-acetyl-L-aspartyl-L-glutamyl-L-glutamate. This is N-acetylaspartylglutamate synthase A (Rimkla) from Mus musculus (Mouse).